The following is a 320-amino-acid chain: Sucrose operon repressor (320 aa).

The 55-residue stretch at 1 to 55 (MKNIADIAKIAGVSKSTVSRYLNNGSVSLKTQQKLDEIIRENDYQPNQFAQSLRA) folds into the HTH lacI-type domain. Residues 4–23 (IADIAKIAGVSKSTVSRYLN) constitute a DNA-binding region (H-T-H motif).

Its function is as follows. Negative regulator of scrB expression. The polypeptide is Sucrose operon repressor (scrR) (Staphylococcus xylosus).